A 540-amino-acid polypeptide reads, in one-letter code: 2-isopropylmalate synthase (540 aa).

The region spanning V8–S271 is the Pyruvate carboxyltransferase domain. Residues D17, H208, H210, and N244 each coordinate Mn(2+). The segment at Q408–L540 is regulatory domain.

It belongs to the alpha-IPM synthase/homocitrate synthase family. LeuA type 1 subfamily. Homodimer. Mn(2+) serves as cofactor.

It is found in the cytoplasm. It carries out the reaction 3-methyl-2-oxobutanoate + acetyl-CoA + H2O = (2S)-2-isopropylmalate + CoA + H(+). It participates in amino-acid biosynthesis; L-leucine biosynthesis; L-leucine from 3-methyl-2-oxobutanoate: step 1/4. Its function is as follows. Catalyzes the condensation of the acetyl group of acetyl-CoA with 3-methyl-2-oxobutanoate (2-ketoisovalerate) to form 3-carboxy-3-hydroxy-4-methylpentanoate (2-isopropylmalate). This chain is 2-isopropylmalate synthase, found in Synechococcus sp. (strain CC9605).